The following is a 243-amino-acid chain: DNA repair protein RecO (243 aa).

The protein belongs to the RecO family.

In terms of biological role, involved in DNA repair and RecF pathway recombination. The chain is DNA repair protein RecO from Xylella fastidiosa (strain M23).